Reading from the N-terminus, the 84-residue chain is Defensin-like protein 199 (84 aa).

The N-terminal stretch at 1 to 24 is a signal peptide; it reads MAITMRTLVAFVFTIFFIISFVHS. Cystine bridges form between Cys40–Cys80, Cys47–Cys72, Cys56–Cys78, and Cys60–Cys79.

It belongs to the DEFL family.

The protein localises to the secreted. In Arabidopsis thaliana (Mouse-ear cress), this protein is Defensin-like protein 199.